The primary structure comprises 735 residues: Diacylglycerol kinase alpha (735 aa).

2 EF-hand domains span residues 110 to 145 and 155 to 190; these read RPED…MMRV and ELRP…TVPL. Residues Asp-123, Asp-125, Asn-127, Glu-134, Asp-168, Asp-170, Ser-172, Ser-174, and Glu-179 each contribute to the Ca(2+) site. 2 Phorbol-ester/DAG-type zinc fingers span residues 205-253 and 269-319; these read QHMW…ALPC and SHVW…GHEC. A DAGKc domain is found at 372 to 506; that stretch reads PNTHPLLVFV…MDRWSVEVIP (135 aa). The residue at position 484 (Lys-484) is an N6-acetyllysine.

This sequence belongs to the eukaryotic diacylglycerol kinase family. In terms of assembly, monomer. Expressed in lymphocytes.

Its subcellular location is the cytoplasm. It localises to the cytosol. The catalysed reaction is a 1,2-diacyl-sn-glycerol + ATP = a 1,2-diacyl-sn-glycero-3-phosphate + ADP + H(+). It carries out the reaction a 1-O-alkyl-sn-glycerol + ATP = a 1-O-alkyl-sn-glycero-3-phosphate + ADP + H(+). It catalyses the reaction 1-O-alkyl-2-acyl-sn-glycerol + ATP = 1-O-alkyl-2-acyl-sn-glycero-3-phosphate + ADP + H(+). The enzyme catalyses 1,2-dihexadecanoyl-sn-glycerol + ATP = 1,2-dihexadecanoyl-sn-glycero-3-phosphate + ADP + H(+). The catalysed reaction is 1-hexadecanoyl-2-(9Z-octadecenoyl)-sn-glycerol + ATP = 1-hexadecanoyl-2-(9Z-octadecenoyl)-sn-glycero-3-phosphate + ADP + H(+). It carries out the reaction 2-(9Z-octadecenoyl)-glycerol + ATP = 2-(9Z-octadecenoyl)-sn-glycero-3-phosphate + ADP + H(+). It catalyses the reaction 1,2-di-(9Z-octadecenoyl)-sn-glycerol + ATP = 1,2-di-(9Z-octadecenoyl)-sn-glycero-3-phosphate + ADP + H(+). The enzyme catalyses 1-octadecanoyl-2-(5Z,8Z,11Z,14Z-eicosatetraenoyl)-sn-glycerol + ATP = 1-octadecanoyl-2-(5Z,8Z,11Z,14Z-eicosatetraenoyl)-sn-glycero-3-phosphate + ADP + H(+). The catalysed reaction is 1,2-didecanoyl-sn-glycerol + ATP = 1,2-didecanoyl-sn-glycero-3-phosphate + ADP + H(+). It carries out the reaction 1-O-hexadecyl-2-acetyl-sn-glycerol + ATP = 1-O-hexadecyl-2-acetyl-sn-glycero-3-phosphate + ADP + H(+). It catalyses the reaction 1-O-hexadecyl-2-(5Z,8Z,11Z,14Z-eicosatetraenoyl)-sn-glycerol + ATP = 1-O-hexadecyl-2-(5Z,8Z,11Z,14Z-eicosatetraenoyl)-sn-glycero-3-phosphate + ADP + H(+). The enzyme catalyses 1-O-hexadecyl-2-(9Z-octadecenoyl)-sn-glycerol + ATP = 1-O-hexadecyl-2-(9Z-octadecenoyl)-sn-glycero-3-phosphate + ADP + H(+). The catalysed reaction is 1-O-hexadecyl-sn-glycerol + ATP = 1-O-hexadecyl-sn-glycero-3-phosphate + ADP + H(+). Its pathway is lipid metabolism; glycerolipid metabolism. Its activity is regulated as follows. Stimulated by calcium and phosphatidylserine. Functionally, diacylglycerol kinase that converts diacylglycerol/DAG into phosphatidic acid/phosphatidate/PA and regulates the respective levels of these two bioactive lipids. Thereby, acts as a central switch between the signaling pathways activated by these second messengers with different cellular targets and opposite effects in numerous biological processes. Also plays an important role in the biosynthesis of complex lipids. Can also phosphorylate 1-alkyl-2-acylglycerol in vitro as efficiently as diacylglycerol provided it contains an arachidonoyl group. Also involved in the production of alkyl-lysophosphatidic acid, another bioactive lipid, through the phosphorylation of 1-alkyl-2-acetyl glycerol. The chain is Diacylglycerol kinase alpha (DGKA) from Homo sapiens (Human).